A 387-amino-acid polypeptide reads, in one-letter code: Exodeoxyribonuclease 7 large subunit (387 aa).

This sequence belongs to the XseA family. In terms of assembly, heterooligomer composed of large and small subunits.

Its subcellular location is the cytoplasm. The enzyme catalyses Exonucleolytic cleavage in either 5'- to 3'- or 3'- to 5'-direction to yield nucleoside 5'-phosphates.. In terms of biological role, bidirectionally degrades single-stranded DNA into large acid-insoluble oligonucleotides, which are then degraded further into small acid-soluble oligonucleotides. This Campylobacter jejuni subsp. jejuni serotype O:23/36 (strain 81-176) protein is Exodeoxyribonuclease 7 large subunit.